The chain runs to 792 residues: Phenylalanine--tRNA ligase beta subunit (792 aa).

The region spanning 39-147 is the tRNA-binding domain; the sequence is GEALDLIVVA…DDAPIGTPLA (109 aa). The B5 domain occupies 400-475; sequence PAPASILLRR…RIRGYEHLPT (76 aa). Positions 453, 459, 462, and 463 each coordinate Mg(2+). Residues 698-791 form the FDX-ACB domain; sequence SRFPFVRRDL…IQQRHDVRIR (94 aa).

Belongs to the phenylalanyl-tRNA synthetase beta subunit family. Type 1 subfamily. As to quaternary structure, tetramer of two alpha and two beta subunits. Requires Mg(2+) as cofactor.

It is found in the cytoplasm. It carries out the reaction tRNA(Phe) + L-phenylalanine + ATP = L-phenylalanyl-tRNA(Phe) + AMP + diphosphate + H(+). This is Phenylalanine--tRNA ligase beta subunit (pheT) from Xylella fastidiosa (strain 9a5c).